We begin with the raw amino-acid sequence, 574 residues long: Protein NDNF (574 aa).

An N-terminal signal peptide occupies residues 1-19 (MTWRCGCYGLVLLVLGVMG). The interval 97-118 (EDRSGEGSGEPEPLEQQKQQVT) is disordered. 2 consecutive Fibronectin type-III domains span residues 174–329 (PELP…TNMS) and 451–560 (PALP…SGHS). N-linked (GlcNAc...) asparagine glycosylation occurs at asparagine 327.

The protein localises to the secreted. In terms of biological role, secretory protein that plays a role in various cellular processes. Acts as a chemorepellent acting on gonadotropin-releasing hormone (GnRH) expressing neurons regulating their migration to the hypothalamus. Also promotes neuron migration, growth and survival as well as neurite outgrowth and is involved in the development of the olfactory system. May also act through the regulation of growth factors activity and downstream signaling. Also regulates extracellular matrix assembly and cell adhesiveness. Promotes endothelial cell survival, vessel formation and plays an important role in the process of revascularization through NOS3-dependent mechanisms. This chain is Protein NDNF (ndnf), found in Danio rerio (Zebrafish).